Consider the following 852-residue polypeptide: Bifunctional uridylyltransferase/uridylyl-removing enzyme (852 aa).

The segment at 1-318 (MPENLSSALE…STPMRVTLRI (318 aa)) is uridylyltransferase. The uridylyl-removing stretch occupies residues 319-672 (DDDYIQVNNQ…SRILPQSDSF (354 aa)). Residues 436–558 (VDDHILAVVR…VQTHERLSAL (123 aa)) form the HD domain. ACT domains are found at residues 673–757 (QVMV…SCNR) and 785–852 (SVEI…EQLA).

The protein belongs to the GlnD family. The cofactor is Mg(2+).

The enzyme catalyses [protein-PII]-L-tyrosine + UTP = [protein-PII]-uridylyl-L-tyrosine + diphosphate. It carries out the reaction [protein-PII]-uridylyl-L-tyrosine + H2O = [protein-PII]-L-tyrosine + UMP + H(+). With respect to regulation, uridylyltransferase (UTase) activity is inhibited by glutamine, while glutamine activates uridylyl-removing (UR) activity. Modifies, by uridylylation and deuridylylation, the PII regulatory proteins (GlnB and homologs), in response to the nitrogen status of the cell that GlnD senses through the glutamine level. Under low glutamine levels, catalyzes the conversion of the PII proteins and UTP to PII-UMP and PPi, while under higher glutamine levels, GlnD hydrolyzes PII-UMP to PII and UMP (deuridylylation). Thus, controls uridylylation state and activity of the PII proteins, and plays an important role in the regulation of nitrogen assimilation and metabolism. This Neisseria gonorrhoeae (strain NCCP11945) protein is Bifunctional uridylyltransferase/uridylyl-removing enzyme.